Here is a 225-residue protein sequence, read N- to C-terminus: Ethylene-responsive transcription factor 3 (225 aa).

Low complexity predominate over residues 1-12 (MRRGRAAAAPAP). Disordered regions lie at residues 1-29 (MRRGRAAAAPAPVTGEPNGSGGSKEIRFR) and 82-193 (NFPL…NIAS). The segment at residues 27-84 (RFRGVRKRPWGRFAAEIRDPWKKTRVWLGTFDSAEDAARAYDAAARALRGPKAKTNFP) is a DNA-binding region (AP2/ERF). Residues 118-134 (SQRPTSSSMSSTVESFS) show a composition bias toward low complexity. Positions 176 to 185 (DHGDCEKEND) are enriched in basic and acidic residues. The EAR-like (transcriptional repression) motif lies at 202–208 (FDLNLPP).

Belongs to the ethylene-response factor family. Class 2 subfamily.

It localises to the nucleus. Its function is as follows. Transcription factor that binds to the GCC-box pathogenesis-related promoter element. Involved in the regulation of gene expression by stress factors and by components of stress signal transduction pathways. Probably acts as a transcriptional repressor and may regulate other AtERFs. The sequence is that of Ethylene-responsive transcription factor 3 (ERF3) from Nicotiana tabacum (Common tobacco).